The primary structure comprises 747 residues: Sex-specific storage-protein 1 (747 aa).

Residues 1–15 (MRVLVLLACLAAASA) form the signal peptide. N-linked (GlcNAc...) asparagine glycans are attached at residues N494 and N706.

It belongs to the hemocyanin family. As to expression, fat body.

It localises to the secreted. It is found in the extracellular space. Larval storage protein (LSP) which may serve as a store of amino acids for synthesis of adult proteins. This is Sex-specific storage-protein 1 (SP1) from Bombyx mori (Silk moth).